Here is an 842-residue protein sequence, read N- to C-terminus: Type VI secretion system spike protein VgrG2a (842 aa).

Positions 265-291 (RSGAGRPFSESRLRGHRRDARVASVSG) are disordered.

It belongs to the VgrG protein family.

Part of the H2 type VI secretion system (H2-T6SS) specialized secretion system, which delivers several virulence factors in both prokaryotic and eukaryotic cells during infection. May form the spike at the tip of the elongating tube formed by haemolysin co-regulated protein 2a/Hcp2a. In turn, may allow the delivery of the Tle4 antibacterial toxin to target cells where it exerts its toxicity. Also promotes the release of VgrG2b toxin to the host cell. The chain is Type VI secretion system spike protein VgrG2a from Pseudomonas aeruginosa (strain ATCC 15692 / DSM 22644 / CIP 104116 / JCM 14847 / LMG 12228 / 1C / PRS 101 / PAO1).